Here is a 22-residue protein sequence, read N- to C-terminus: Mu-conotoxin GIIIB (22 aa).

3 disulfide bridges follow: Cys3-Cys15, Cys4-Cys20, and Cys10-Cys21. 4-hydroxyproline; partial occurs at positions 6 and 7. Pro17 is modified (4-hydroxyproline). Ala22 carries the post-translational modification Alanine amide.

Belongs to the conotoxin M superfamily. In terms of tissue distribution, expressed by the venom duct.

Its subcellular location is the secreted. Functionally, mu-conotoxins block voltage-gated sodium channels (Nav). The protein is Mu-conotoxin GIIIB of Conus geographus (Geography cone).